A 143-amino-acid chain; its full sequence is ATP synthase subunit b' (143 aa).

The chain crosses the membrane as a helical span at residues 6 to 26 (ATLPVMALQFILLAVILNAVF).

This sequence belongs to the ATPase B chain family. In terms of assembly, F-type ATPases have 2 components, F(1) - the catalytic core - and F(0) - the membrane proton channel. F(1) has five subunits: alpha(3), beta(3), gamma(1), delta(1), epsilon(1). F(0) has four main subunits: a(1), b(1), b'(1) and c(10-14). The alpha and beta chains form an alternating ring which encloses part of the gamma chain. F(1) is attached to F(0) by a central stalk formed by the gamma and epsilon chains, while a peripheral stalk is formed by the delta, b and b' chains.

It is found in the cellular thylakoid membrane. In terms of biological role, f(1)F(0) ATP synthase produces ATP from ADP in the presence of a proton or sodium gradient. F-type ATPases consist of two structural domains, F(1) containing the extramembraneous catalytic core and F(0) containing the membrane proton channel, linked together by a central stalk and a peripheral stalk. During catalysis, ATP synthesis in the catalytic domain of F(1) is coupled via a rotary mechanism of the central stalk subunits to proton translocation. Its function is as follows. Component of the F(0) channel, it forms part of the peripheral stalk, linking F(1) to F(0). The b'-subunit is a diverged and duplicated form of b found in plants and photosynthetic bacteria. This is ATP synthase subunit b' from Microcystis aeruginosa (strain NIES-843 / IAM M-2473).